The following is a 669-amino-acid chain: Epithelial sodium channel subunit alpha (669 aa).

The tract at residues 1 to 43 (MEGNKLEEQDSSPPQSTPGLMKGNKREEQGLGPEPAAPQQPTA) is disordered. The Cytoplasmic portion of the chain corresponds to 1–85 (MEGNKLEEQD…CSQHNRMKTA (85 aa)). Residues 33–42 (PEPAAPQQPT) show a composition bias toward low complexity. Residues 86 to 106 (FWAVLWLCTFGMMYWQFGLLF) form a helical membrane-spanning segment. At 107–562 (GEYFSYPVSL…SQWSLWFGSS (456 aa)) the chain is on the extracellular side. 10 cysteine pairs are disulfide-bonded: cysteine 133–cysteine 305, cysteine 229–cysteine 236, cysteine 282–cysteine 289, cysteine 394–cysteine 479, cysteine 416–cysteine 456, cysteine 416–cysteine 475, cysteine 420–cysteine 471, cysteine 429–cysteine 456, cysteine 429–cysteine 479, and cysteine 431–cysteine 445. The gating release of inhibition by proteolysis (GRIP); protease-sensitive region that is responsible for the proteolytic activation of the channel stretch occupies residues 175 to 243 (RSRRDLRGTL…SDCFYQTYSS (69 aa)). Residues 563–583 (VLSVVEMAELVFDLLVIMFLM) traverse the membrane as a helical segment. The Cytoplasmic portion of the chain corresponds to 584 to 669 (LLRRFRSRYW…SSSTCPLGGP (86 aa)). The disordered stretch occupies residues 620–669 (HPMSLSLSQPGPAPSPALTAPPPAYATLGPRPSPGGSAGASSSTCPLGGP). Residues 630 to 643 (GPAPSPALTAPPPA) show a composition bias toward pro residues. The PY motif; recruits WW domain-containing proteins and is thereby required for ubiquitination and inhibition of the channel by NEDD4 and NEDD4L signature appears at 640 to 644 (PPPAY).

It belongs to the amiloride-sensitive sodium channel (TC 1.A.6) family. SCNN1A subfamily. Heterotrimer; containing an alpha/SCNN1A, a beta/SCNN1B and a gamma/SCNN1G subunit. Interacts with WWP1 (via WW domains). Interacts with WWP2 (via WW domains); inhibits the channel. Interacts with BPIFA1; the interaction is indirect via SCNN1B and inhibits the proteolytic processing of SCNN1A and SCNN1G and the activation of ENaC. Interacts with the full-length immature form of PCSK9 (pro-PCSK9); inhibits ENaC by promoting its proteasomal degradation. Post-translationally, ubiquitinated. Can be ubiquitinated at multiple sites and undergo monoubiquitination and polyubiquitination. Ubiquitination by NEDD4 or NEDD4L inhibits the ENaC channel through endocytosis, intracellular retention and degradation of its individual subunits. In terms of processing, ENaC is activated through the proteolytic maturation of its subunits. Furin cleaves the SCNN1A subunit, which results in a stepwise increase in the open probability of the channel due to the release of an inhibitory tract. BPIFA1, which is recruited by the SCNN1B subunit, prevents the proteolytic activation of ENaC. N-glycosylated. In terms of tissue distribution, expressed in the female reproductive tract, from the fimbrial end of the fallopian tube to the endometrium (at protein level). Expressed in kidney (at protein level). In the respiratory tract, expressed in the bronchial epithelium (at protein level). Highly expressed in lung. Detected at intermediate levels in pancreas and liver, and at low levels in heart and placenta. in skin, expressed in keratinocytes, melanocytes and Merkel cells of the epidermal sub-layers, stratum basale, stratum spinosum and stratum granulosum (at protein level). Expressed in the outer root sheath of the hair follicles (at protein level). Detected in both peripheral and central cells of the sebaceous gland (at protein level). Expressed by eccrine sweat glands (at protein level). In skin, also expressed by arrector pili muscle cells and intradermal adipocytes. Isoform 1 and isoform 2 predominate in all tissues. Detected in lung and heart.

The protein resides in the apical cell membrane. Its subcellular location is the cell projection. The protein localises to the cilium. It is found in the cytoplasmic granule. It localises to the cytoplasm. The protein resides in the cytoplasmic vesicle. Its subcellular location is the secretory vesicle. The protein localises to the acrosome. It is found in the flagellum. The catalysed reaction is Na(+)(in) = Na(+)(out). Originally identified and characterized by its inhibition by the diuretic drug amiloride. Inhibited by phenamil. This is one of the three pore-forming subunits of the heterotrimeric epithelial sodium channel (ENaC), a critical regulator of sodium balance and fluid homeostasis. ENaC operates in epithelial tissues, where it mediates the electrodiffusion of sodium ions from extracellular fluid through the apical membrane of cells, with water following osmotically. It plays a key role in maintaining sodium homeostasis through electrogenic sodium reabsorption in the kidneys. Additionally, ENaC is essential for airway surface liquid homeostasis, which is crucial for proper mucus clearance. Its function is as follows. Not functional. This is Epithelial sodium channel subunit alpha from Homo sapiens (Human).